A 450-amino-acid chain; its full sequence is Bifunctional protein GlmU (450 aa).

Positions 1-217 (MKTLILAAGL…VDEITGVNNR (217 aa)) are pyrophosphorylase. Residues 6 to 9 (LAAG), Lys-20, Gln-68, 73 to 74 (GT), 95 to 97 (YGD), Gly-134, Glu-146, Asn-161, and Asn-215 each bind UDP-N-acetyl-alpha-D-glucosamine. A Mg(2+)-binding site is contributed by Asp-97. Asn-215 contacts Mg(2+). Residues 218–238 (IQLANLEKKIRRKINEKLMNQ) are linker. The N-acetyltransferase stretch occupies residues 239 to 450 (GVRIIDPNAV…GGQKNANNKK (212 aa)). Residues Arg-320 and Lys-338 each contribute to the UDP-N-acetyl-alpha-D-glucosamine site. The Proton acceptor role is filled by His-350. UDP-N-acetyl-alpha-D-glucosamine contacts are provided by Tyr-353 and Asn-364. Residues Ala-367, 373-374 (NY), Ser-392, Ala-410, and Arg-427 each bind acetyl-CoA.

This sequence in the N-terminal section; belongs to the N-acetylglucosamine-1-phosphate uridyltransferase family. In the C-terminal section; belongs to the transferase hexapeptide repeat family. In terms of assembly, homotrimer. Mg(2+) serves as cofactor.

The protein localises to the cytoplasm. The enzyme catalyses alpha-D-glucosamine 1-phosphate + acetyl-CoA = N-acetyl-alpha-D-glucosamine 1-phosphate + CoA + H(+). It catalyses the reaction N-acetyl-alpha-D-glucosamine 1-phosphate + UTP + H(+) = UDP-N-acetyl-alpha-D-glucosamine + diphosphate. The protein operates within nucleotide-sugar biosynthesis; UDP-N-acetyl-alpha-D-glucosamine biosynthesis; N-acetyl-alpha-D-glucosamine 1-phosphate from alpha-D-glucosamine 6-phosphate (route II): step 2/2. It participates in nucleotide-sugar biosynthesis; UDP-N-acetyl-alpha-D-glucosamine biosynthesis; UDP-N-acetyl-alpha-D-glucosamine from N-acetyl-alpha-D-glucosamine 1-phosphate: step 1/1. Its pathway is bacterial outer membrane biogenesis; LPS lipid A biosynthesis. Functionally, catalyzes the last two sequential reactions in the de novo biosynthetic pathway for UDP-N-acetylglucosamine (UDP-GlcNAc). The C-terminal domain catalyzes the transfer of acetyl group from acetyl coenzyme A to glucosamine-1-phosphate (GlcN-1-P) to produce N-acetylglucosamine-1-phosphate (GlcNAc-1-P), which is converted into UDP-GlcNAc by the transfer of uridine 5-monophosphate (from uridine 5-triphosphate), a reaction catalyzed by the N-terminal domain. This Thermosipho melanesiensis (strain DSM 12029 / CIP 104789 / BI429) protein is Bifunctional protein GlmU.